A 344-amino-acid chain; its full sequence is Holliday junction branch migration complex subunit RuvB (344 aa).

The interval 1 to 183 is large ATPase domain (RuvB-L); the sequence is MLDERLISSH…FGISCRLDFY (183 aa). Residues Ile22, Arg23, Gly64, Lys67, Thr68, Thr69, 130-132, Arg173, Tyr183, and Arg220 each bind ATP; that span reads EDY. Thr68 provides a ligand contact to Mg(2+). A small ATPAse domain (RuvB-S) region spans residues 184-254; sequence TPLELSEIIL…LAKWALEMLE (71 aa). Residues 257 to 344 are head domain (RuvB-H); the sequence is ECGLDVMDRM…LEGKGLFSDA (88 aa). The DNA site is built by Lys312 and Arg317.

This sequence belongs to the RuvB family. Homohexamer. Forms an RuvA(8)-RuvB(12)-Holliday junction (HJ) complex. HJ DNA is sandwiched between 2 RuvA tetramers; dsDNA enters through RuvA and exits via RuvB. An RuvB hexamer assembles on each DNA strand where it exits the tetramer. Each RuvB hexamer is contacted by two RuvA subunits (via domain III) on 2 adjacent RuvB subunits; this complex drives branch migration. In the full resolvosome a probable DNA-RuvA(4)-RuvB(12)-RuvC(2) complex forms which resolves the HJ.

It is found in the cytoplasm. The catalysed reaction is ATP + H2O = ADP + phosphate + H(+). In terms of biological role, the RuvA-RuvB-RuvC complex processes Holliday junction (HJ) DNA during genetic recombination and DNA repair, while the RuvA-RuvB complex plays an important role in the rescue of blocked DNA replication forks via replication fork reversal (RFR). RuvA specifically binds to HJ cruciform DNA, conferring on it an open structure. The RuvB hexamer acts as an ATP-dependent pump, pulling dsDNA into and through the RuvAB complex. RuvB forms 2 homohexamers on either side of HJ DNA bound by 1 or 2 RuvA tetramers; 4 subunits per hexamer contact DNA at a time. Coordinated motions by a converter formed by DNA-disengaged RuvB subunits stimulates ATP hydrolysis and nucleotide exchange. Immobilization of the converter enables RuvB to convert the ATP-contained energy into a lever motion, pulling 2 nucleotides of DNA out of the RuvA tetramer per ATP hydrolyzed, thus driving DNA branch migration. The RuvB motors rotate together with the DNA substrate, which together with the progressing nucleotide cycle form the mechanistic basis for DNA recombination by continuous HJ branch migration. Branch migration allows RuvC to scan DNA until it finds its consensus sequence, where it cleaves and resolves cruciform DNA. This chain is Holliday junction branch migration complex subunit RuvB, found in Syntrophomonas wolfei subsp. wolfei (strain DSM 2245B / Goettingen).